The following is a 284-amino-acid chain: Pantothenate synthetase (284 aa).

30–37 (MGNLHQGH) provides a ligand contact to ATP. Residue H37 is the Proton donor of the active site. Q61 serves as a coordination point for (R)-pantoate. Position 61 (Q61) interacts with beta-alanine. Position 149-152 (149-152 (GQKD)) interacts with ATP. Q155 serves as a coordination point for (R)-pantoate. Residues V178 and 186-189 (LSSR) each bind ATP.

The protein belongs to the pantothenate synthetase family. As to quaternary structure, homodimer.

It localises to the cytoplasm. The enzyme catalyses (R)-pantoate + beta-alanine + ATP = (R)-pantothenate + AMP + diphosphate + H(+). It functions in the pathway cofactor biosynthesis; (R)-pantothenate biosynthesis; (R)-pantothenate from (R)-pantoate and beta-alanine: step 1/1. Functionally, catalyzes the condensation of pantoate with beta-alanine in an ATP-dependent reaction via a pantoyl-adenylate intermediate. This chain is Pantothenate synthetase, found in Aeromonas salmonicida (strain A449).